Consider the following 262-residue polypeptide: UPF0739 protein C1orf74 homolog (262 aa).

The protein belongs to the UPF0739 family.

This chain is UPF0739 protein C1orf74 homolog, found in Xenopus laevis (African clawed frog).